Reading from the N-terminus, the 293-residue chain is Formamidopyrimidine-DNA glycosylase (293 aa).

Catalysis depends on proline 2, which acts as the Schiff-base intermediate with DNA. Residue glutamate 3 is the Proton donor of the active site. Lysine 58 (proton donor; for beta-elimination activity) is an active-site residue. Histidine 104, arginine 123, and lysine 166 together coordinate DNA. An FPG-type zinc finger spans residues 257–293; sequence QVYDREGEPCRTDGCGGVVKRFVQNGRSTFWCPKCQR. Arginine 283 (proton donor; for delta-elimination activity) is an active-site residue.

This sequence belongs to the FPG family. Monomer. Zn(2+) is required as a cofactor.

It carries out the reaction Hydrolysis of DNA containing ring-opened 7-methylguanine residues, releasing 2,6-diamino-4-hydroxy-5-(N-methyl)formamidopyrimidine.. The enzyme catalyses 2'-deoxyribonucleotide-(2'-deoxyribose 5'-phosphate)-2'-deoxyribonucleotide-DNA = a 3'-end 2'-deoxyribonucleotide-(2,3-dehydro-2,3-deoxyribose 5'-phosphate)-DNA + a 5'-end 5'-phospho-2'-deoxyribonucleoside-DNA + H(+). In terms of biological role, involved in base excision repair of DNA damaged by oxidation or by mutagenic agents. Acts as a DNA glycosylase that recognizes and removes damaged bases. Has a preference for oxidized purines, such as 7,8-dihydro-8-oxoguanine (8-oxoG). Has AP (apurinic/apyrimidinic) lyase activity and introduces nicks in the DNA strand. Cleaves the DNA backbone by beta-delta elimination to generate a single-strand break at the site of the removed base with both 3'- and 5'-phosphates. The chain is Formamidopyrimidine-DNA glycosylase from Bradyrhizobium sp. (strain BTAi1 / ATCC BAA-1182).